A 206-amino-acid polypeptide reads, in one-letter code: Glycerol-3-phosphate acyltransferase 1 (206 aa).

5 helical membrane-spanning segments follow: residues 7–27 (LVIG…KIFL), 54–74 (ILTC…VYFI), 81–101 (DLSF…WNHF), 114–134 (IVFF…FLVI), and 155–175 (WINF…IMIF).

This sequence belongs to the PlsY family. As to quaternary structure, probably interacts with PlsX.

The protein resides in the cell membrane. It carries out the reaction an acyl phosphate + sn-glycerol 3-phosphate = a 1-acyl-sn-glycero-3-phosphate + phosphate. Its pathway is lipid metabolism; phospholipid metabolism. In terms of biological role, catalyzes the transfer of an acyl group from acyl-phosphate (acyl-PO(4)) to glycerol-3-phosphate (G3P) to form lysophosphatidic acid (LPA). This enzyme utilizes acyl-phosphate as fatty acyl donor, but not acyl-CoA or acyl-ACP. The protein is Glycerol-3-phosphate acyltransferase 1 of Lactobacillus johnsonii (strain CNCM I-12250 / La1 / NCC 533).